A 364-amino-acid chain; its full sequence is Probable UDP-arabinopyranose mutase 1 (364 aa).

The DXD motif signature appears at 110–112 (DDD). An N-linked (Glc...) arginine glycan is attached at Arg-158.

This sequence belongs to the RGP family. Homopentamer or homohexamer. It depends on Mn(2+) as a cofactor. Requires Mg(2+) as cofactor. Reversibly glycosylated by UDP-glucose, UDP-xylose and UDP-galactose.

Its subcellular location is the secreted. It localises to the cell wall. The protein localises to the cell junction. The protein resides in the plasmodesma. It is found in the golgi apparatus. It carries out the reaction UDP-beta-L-arabinofuranose = UDP-beta-L-arabinopyranose. Its function is as follows. Probable UDP-L-arabinose mutase involved in the biosynthesis of cell wall non-cellulosic polysaccharides. Was initially shown to possess an autoglycosylating activity which is dependent on the presence of UDP-glucose and manganese. This chain is Probable UDP-arabinopyranose mutase 1, found in Zea mays (Maize).